The chain runs to 1319 residues: DNA (cytosine-5)-methyltransferase CMT2 (1319 aa).

The span at 1–15 (METPPPDPVSPPPPA) shows a compositional bias: pro residues. Disordered regions lie at residues 1–34 (METPPPDPVSPPPPAADEGSPGGDDGAEDAGGFS), 142–189 (ALDS…VASS), 265–302 (SAASSMPLNQNGDSSRASKRRVADSRKSRSSEGSKLPA), and 442–468 (KSRVVSKTPQGRGRRSPQPPKTQRART). Residues 266–279 (AASSMPLNQNGDSS) are compositionally biased toward polar residues. Residues 285–296 (RVADSRKSRSSE) are compositionally biased toward basic and acidic residues. Residues 602 to 719 (YTFCIGECAF…IDYSTFSTIE (118 aa)) enclose the BAH domain. Positions 758–1296 (LSLLDLYCGC…YALAMAYLKK (539 aa)) constitute an SAM-dependent MTase C5-type domain. One can recognise a Chromo domain in the interval 863-928 (FEVWKLVDIC…EGHRQRILPR (66 aa)). The active site involves Cys-941.

It is found in the nucleus. It carries out the reaction a 2'-deoxycytidine in DNA + S-adenosyl-L-methionine = a 5-methyl-2'-deoxycytidine in DNA + S-adenosyl-L-homocysteine + H(+). Involved in CpXpG DNA methylation. This chain is DNA (cytosine-5)-methyltransferase CMT2, found in Oryza sativa subsp. japonica (Rice).